A 65-amino-acid polypeptide reads, in one-letter code: Small ribosomal subunit protein bS21B (65 aa).

Belongs to the bacterial ribosomal protein bS21 family.

This is Small ribosomal subunit protein bS21B from Geobacter sulfurreducens (strain ATCC 51573 / DSM 12127 / PCA).